A 257-amino-acid polypeptide reads, in one-letter code: tRNA pseudouridine synthase A (257 aa).

Aspartate 43 functions as the Nucleophile in the catalytic mechanism. Tyrosine 94 contacts substrate.

Belongs to the tRNA pseudouridine synthase TruA family.

It catalyses the reaction uridine(38/39/40) in tRNA = pseudouridine(38/39/40) in tRNA. In terms of biological role, formation of pseudouridine at positions 38, 39 and 40 in the anticodon stem and loop of transfer RNAs. The chain is tRNA pseudouridine synthase A from Pyrobaculum arsenaticum (strain DSM 13514 / JCM 11321 / PZ6).